The chain runs to 518 residues: U-box domain-containing protein 57 (518 aa).

Residues 86-142 (EEVRKVHILEEEIVTLKHQADTYLVQKEKAVTAYDQLKHERDNAVQQVNELRDQSTH) adopt a coiled-coil conformation. The Protein kinase domain occupies 159 to 409 (FKNAREVGDT…RPDLLNEVWI (251 aa)). Residues 434-508 (SVPAAFICPI…HGYLQQQQPN (75 aa)) enclose the U-box domain.

It catalyses the reaction S-ubiquitinyl-[E2 ubiquitin-conjugating enzyme]-L-cysteine + [acceptor protein]-L-lysine = [E2 ubiquitin-conjugating enzyme]-L-cysteine + N(6)-ubiquitinyl-[acceptor protein]-L-lysine.. The protein operates within protein modification; protein ubiquitination. Possesses E3 ubiquitin-protein ligase in vitro. May be involved in cell death signaling. In Oryza sativa subsp. japonica (Rice), this protein is U-box domain-containing protein 57 (PUB57).